The following is a 208-amino-acid chain: Uracil phosphoribosyltransferase (208 aa).

5-phospho-alpha-D-ribose 1-diphosphate is bound by residues R78, R103, and 130 to 138; that span reads DPMLATANS. Residues I193 and 198–200 contribute to the uracil site; that span reads GDA. Residue D199 participates in 5-phospho-alpha-D-ribose 1-diphosphate binding.

It belongs to the UPRTase family. Mg(2+) is required as a cofactor.

The catalysed reaction is UMP + diphosphate = 5-phospho-alpha-D-ribose 1-diphosphate + uracil. Its pathway is pyrimidine metabolism; UMP biosynthesis via salvage pathway; UMP from uracil: step 1/1. Its activity is regulated as follows. Allosterically activated by GTP. In terms of biological role, catalyzes the conversion of uracil and 5-phospho-alpha-D-ribose 1-diphosphate (PRPP) to UMP and diphosphate. The protein is Uracil phosphoribosyltransferase of Brucella abortus biovar 1 (strain 9-941).